Reading from the N-terminus, the 90-residue chain is MSIKLINIGFGNIVSANRLVAIVSPESAPIKRIIQEARDRGMLIDATYGRRTRAVIITDSDHVILSAVQPETVAHRLSSKDEVNIDEVDE.

The protein belongs to the RemA family.

The protein is Putative regulatory protein NT01CX_2250 of Clostridium novyi (strain NT).